The primary structure comprises 226 residues: Probable proteasome subunit beta type-7 (226 aa).

The protein belongs to the peptidase T1B family. The 26S proteasome consists of a 20S proteasome core and two 19S regulatory subunits. The 20S proteasome core is composed of 28 subunits that are arranged in four stacked rings, resulting in a barrel-shaped structure. The two end rings are each formed by seven alpha subunits, and the two central rings are each formed by seven beta subunits. The catalytic chamber with the active sites is on the inside of the barrel.

It is found in the cytoplasm. The protein localises to the nucleus. Functionally, non-catalytic component of the proteasome which degrades poly-ubiquitinated proteins in the cytoplasm and in the nucleus. It is essential for the regulated turnover of proteins and for the removal of misfolded proteins. The proteasome is a multicatalytic proteinase complex that is characterized by its ability to cleave peptides with Arg, Phe, Tyr, Leu, and Glu adjacent to the leaving group at neutral or slightly basic pH. It has an ATP-dependent proteolytic activity. In Encephalitozoon cuniculi (strain GB-M1) (Microsporidian parasite), this protein is Probable proteasome subunit beta type-7 (PRE4).